The primary structure comprises 192 residues: Signal peptidase complex catalytic subunit SEC11C (192 aa).

The Cytoplasmic portion of the chain corresponds to 2 to 28; it reads VRAGAVGTHLPASGLDIFGDLRKMNKR. A helical; Signal-anchor for type II membrane protein membrane pass occupies residues 29-48; that stretch reads QLYYQVLNFAMIVSSALMIW. Over 49–192 the chain is Lumenal; it reads KGLIVLTGSE…GAYVLLKRES (144 aa). Active-site charge relay system residues include Ser-68, His-108, and Asp-134. Residues 177–188 form a C-terminal short (CTS) helix region; it reads ALLAVMGAYVLL.

Belongs to the peptidase S26B family. As to quaternary structure, component of the signal peptidase complex paralog C (SPC-C) composed of a catalytic subunit SEC11C and three accessory subunits SPCS1, SPCS2 and SPCS3. Within the complex, interacts with SPCS2 and SPCS3. The complex induces a local thinning of the ER membrane which is used to measure the length of the signal peptide (SP) h-region of protein substrates. This ensures the selectivity of the complex towards h-regions shorter than 18-20 amino acids. In terms of processing, may undergo processing at the N-terminus.

It is found in the endoplasmic reticulum membrane. It catalyses the reaction Cleavage of hydrophobic, N-terminal signal or leader sequences from secreted and periplasmic proteins.. Its function is as follows. Catalytic component of the signal peptidase complex (SPC) which catalyzes the cleavage of N-terminal signal sequences from nascent proteins as they are translocated into the lumen of the endoplasmic reticulum. Specifically cleaves N-terminal signal peptides that contain a hydrophobic alpha-helix (h-region) shorter than 18-20 amino acids. The sequence is that of Signal peptidase complex catalytic subunit SEC11C (SEC11C) from Canis lupus familiaris (Dog).